The sequence spans 293 residues: Aspartate carbamoyltransferase catalytic subunit (293 aa).

The carbamoyl phosphate site is built by Arg-50 and Thr-51. Lys-78 contributes to the L-aspartate binding site. Positions 100, 127, and 130 each coordinate carbamoyl phosphate. Arg-160 and Arg-210 together coordinate L-aspartate. Residues Ala-253 and Pro-254 each coordinate carbamoyl phosphate.

This sequence belongs to the aspartate/ornithine carbamoyltransferase superfamily. ATCase family. In terms of assembly, heterododecamer (2C3:3R2) of six catalytic PyrB chains organized as two trimers (C3), and six regulatory PyrI chains organized as three dimers (R2).

The enzyme catalyses carbamoyl phosphate + L-aspartate = N-carbamoyl-L-aspartate + phosphate + H(+). The protein operates within pyrimidine metabolism; UMP biosynthesis via de novo pathway; (S)-dihydroorotate from bicarbonate: step 2/3. Its function is as follows. Catalyzes the condensation of carbamoyl phosphate and aspartate to form carbamoyl aspartate and inorganic phosphate, the committed step in the de novo pyrimidine nucleotide biosynthesis pathway. This chain is Aspartate carbamoyltransferase catalytic subunit, found in Staphylococcus epidermidis (strain ATCC 12228 / FDA PCI 1200).